The chain runs to 254 residues: Alcohol dehydrogenase (254 aa).

Position 10–33 (10–33) interacts with NAD(+); sequence FVAGLGGIGLDTSREIVKSGPKNL. Ser-138 contacts substrate. Tyr-151 serves as the catalytic Proton acceptor.

Belongs to the short-chain dehydrogenases/reductases (SDR) family. In terms of assembly, homodimer.

The catalysed reaction is a primary alcohol + NAD(+) = an aldehyde + NADH + H(+). It catalyses the reaction a secondary alcohol + NAD(+) = a ketone + NADH + H(+). The chain is Alcohol dehydrogenase (Adh) from Drosophila picticornis (Fruit fly).